The primary structure comprises 268 residues: Phosphatidylglycerol--prolipoprotein diacylglyceryl transferase (268 aa).

7 helical membrane-spanning segments follow: residues 10–30 (VALA…LIGI), 56–76 (LVFW…VLFY), 92–112 (WKGG…ALWF), 120–140 (FFEL…AGRI), 174–194 (PSQL…LWLF), 202–222 (MAVS…VEFV), and 236–256 (WLTM…GLIW). Position 139 (arginine 139) interacts with a 1,2-diacyl-sn-glycero-3-phospho-(1'-sn-glycerol).

Belongs to the Lgt family.

The protein resides in the cell inner membrane. It catalyses the reaction L-cysteinyl-[prolipoprotein] + a 1,2-diacyl-sn-glycero-3-phospho-(1'-sn-glycerol) = an S-1,2-diacyl-sn-glyceryl-L-cysteinyl-[prolipoprotein] + sn-glycerol 1-phosphate + H(+). It functions in the pathway protein modification; lipoprotein biosynthesis (diacylglyceryl transfer). Catalyzes the transfer of the diacylglyceryl group from phosphatidylglycerol to the sulfhydryl group of the N-terminal cysteine of a prolipoprotein, the first step in the formation of mature lipoproteins. The chain is Phosphatidylglycerol--prolipoprotein diacylglyceryl transferase from Pseudomonas putida (strain ATCC 700007 / DSM 6899 / JCM 31910 / BCRC 17059 / LMG 24140 / F1).